The chain runs to 780 residues: Oocyte zinc finger protein XlCOF8.4 (780 aa).

15 consecutive C2H2-type zinc fingers follow at residues 250–272 (FPCSECGKCFAGSSELNVHRRTH), 278–300 (FSCSQCGKCFSNQTKLKYHHRTH), 306–328 (FSCSECGKCFSTPHVRARHQKTH), 334–356 (FPCSECGKCFARSSDVTVHRRTH), 362–384 (YSCSQCGKCFTRSSDLNVHRRTH), 390–412 (YSCSHCGKCFTTSSELNVHRRTH), 418–440 (YSCSECGKSFPTSSEFTSHWKTH), 446–468 (FSCVQCGKCFSKDTHLKYHYRTH), 474–496 (FSCFECGKCFTHNGSLKVHLKIH), 618–640 (LSCSECGKCFSTYHVLARHQKTH), 646–668 (FSCSECEKCYARSSDLNVHRRTH), 674–696 (YSCSECGKCFTRSSDFNVHRRTH), 702–724 (YSCSECGRCFPTSSVLTSHWRTH), 730–752 (FSCTECGKCFSRETYLKYHHRTH), and 758–780 (FSCSECGKCFTCNSSLKVHFQLH).

This sequence belongs to the krueppel C2H2-type zinc-finger protein family.

It localises to the nucleus. May be involved in transcriptional regulation. This chain is Oocyte zinc finger protein XlCOF8.4, found in Xenopus laevis (African clawed frog).